The chain runs to 23 residues: Defensin D4 (23 aa).

It belongs to the DEFL family. Group IV subfamily. In terms of tissue distribution, distributed in the epidermal cell layer of leaves and in the subepidermal layer region of stems. Not in roots.

It is found in the secreted. The protein localises to the cell wall. Functionally, antimicrobial peptide. Active against Fusarium spp., Gram-positive and Gram-negative bacterial pathogens. The protein is Defensin D4 of Spinacia oleracea (Spinach).